A 134-amino-acid polypeptide reads, in one-letter code: Small ribosomal subunit protein uS8c (134 aa).

It belongs to the universal ribosomal protein uS8 family. Part of the 30S ribosomal subunit.

It is found in the plastid. The protein localises to the chloroplast. In terms of biological role, one of the primary rRNA binding proteins, it binds directly to 16S rRNA central domain where it helps coordinate assembly of the platform of the 30S subunit. This is Small ribosomal subunit protein uS8c (rps8) from Vitis vinifera (Grape).